Reading from the N-terminus, the 145-residue chain is uncharacterized protein (145 aa).

Positions 62-145 are disordered; that stretch reads LPSVGGRMTA…QLPQQGGCPG (84 aa). Over residues 84–95 the composition is skewed to pro residues; that stretch reads ASSPEDPPLPHP.

This is an uncharacterized protein from Homo sapiens (Human).